Reading from the N-terminus, the 147-residue chain is Nucleoside diphosphate kinase (147 aa).

Residues K11, F59, R87, T93, R104, and N114 each coordinate ATP. H117 acts as the Pros-phosphohistidine intermediate in catalysis.

Belongs to the NDK family. Mg(2+) is required as a cofactor.

The protein localises to the cytoplasm. The enzyme catalyses a 2'-deoxyribonucleoside 5'-diphosphate + ATP = a 2'-deoxyribonucleoside 5'-triphosphate + ADP. It catalyses the reaction a ribonucleoside 5'-diphosphate + ATP = a ribonucleoside 5'-triphosphate + ADP. Its function is as follows. Major role in the synthesis of nucleoside triphosphates other than ATP. The ATP gamma phosphate is transferred to the NDP beta phosphate via a ping-pong mechanism, using a phosphorylated active-site intermediate. This chain is Nucleoside diphosphate kinase, found in Sulfurisphaera tokodaii (strain DSM 16993 / JCM 10545 / NBRC 100140 / 7) (Sulfolobus tokodaii).